A 91-amino-acid polypeptide reads, in one-letter code: YcgL domain-containing protein Sde_1339 (91 aa).

In terms of domain architecture, YcgL spans 1-85 (MIVDIYRSAK…PPESYMNEIP (85 aa)). The tract at residues 72 to 91 (QMPPPPESYMNEIPNDKMPR) is disordered.

This Saccharophagus degradans (strain 2-40 / ATCC 43961 / DSM 17024) protein is YcgL domain-containing protein Sde_1339.